We begin with the raw amino-acid sequence, 341 residues long: Delta(1)-pyrroline-2-carboxylate reductase (341 aa).

The Charge relay system role is filled by Ser-47. The active-site Proton donor is His-48. Arg-52 is a substrate binding site. 120 to 124 is a binding site for NADP(+); it reads HFSAL. Thr-160 serves as a coordination point for substrate. NADP(+) is bound at residue 178 to 180; it reads DFA. Substrate is bound at residue 186-187; that stretch reads RG. Glu-188 acts as the Charge relay system in catalysis. NADP(+) contacts are provided by residues 229–230 and 305–311; these read HK and RLPSERR.

Belongs to the LDH2/MDH2 oxidoreductase family. In terms of assembly, homodimer.

It catalyses the reaction L-proline + NAD(+) = 1-pyrroline-2-carboxylate + NADH + H(+). The enzyme catalyses L-proline + NADP(+) = 1-pyrroline-2-carboxylate + NADPH + H(+). Its function is as follows. Catalyzes the reduction of Delta(1)-pyrroline-2-carboxylate (Pyr2C) to L-proline, using NADPH as the electron donor. Is likely involved in a degradation pathway that converts cis- and trans-3-hydroxy-L-proline (c3LHyp and t3LHyp) to L-proline, which would allow S.novella to grow on c3LHyp or t3LHyp as a sole carbon source. The sequence is that of Delta(1)-pyrroline-2-carboxylate reductase from Ancylobacter novellus (strain ATCC 8093 / DSM 506 / JCM 20403 / CCM 1077 / IAM 12100 / NBRC 12443 / NCIMB 10456) (Starkeya novella).